A 210-amino-acid chain; its full sequence is Protein HEADING DATE REPRESSOR 1 (210 aa).

Residues Met1–Leu97 are disordered. Residues Gln29–Ala49 are a coiled coil. Composition is skewed to basic and acidic residues over residues Ala45–Asp54 and Asp62–Leu79. Residues Arg129 to Gln184 adopt a coiled-coil conformation.

In terms of assembly, interacts with OSK3 and OSK4. As to expression, mostly expressed in leaves, seedlings and floral organs, and, to a lower extent, in panicle, roots, nodes, internodes, leaf joint and sheath.

It localises to the nucleus. Regulates flowering time via a photoperiod-dependent pathway. Suppressor of flowering that upregulates HD1 and down-regulates EHD1 in long days (LD), thus leading to the down-regulation of HD3A and RFT1. Triggers OSK4-mediated HD1 phosphorylation. The chain is Protein HEADING DATE REPRESSOR 1 from Oryza sativa subsp. japonica (Rice).